A 39-amino-acid polypeptide reads, in one-letter code: Cytochrome b559 subunit beta (39 aa).

Residues 14 to 30 traverse the membrane as a helical segment; the sequence is WLAIHGLAVPTVFFLGS. His18 contributes to the heme binding site.

Belongs to the PsbE/PsbF family. In terms of assembly, heterodimer of an alpha subunit and a beta subunit. PSII is composed of 1 copy each of membrane proteins PsbA, PsbB, PsbC, PsbD, PsbE, PsbF, PsbH, PsbI, PsbJ, PsbK, PsbL, PsbM, PsbT, PsbX, PsbY, PsbZ, Psb30/Ycf12, at least 3 peripheral proteins of the oxygen-evolving complex and a large number of cofactors. It forms dimeric complexes. Requires heme b as cofactor.

It localises to the plastid. The protein resides in the chloroplast thylakoid membrane. In terms of biological role, this b-type cytochrome is tightly associated with the reaction center of photosystem II (PSII). PSII is a light-driven water:plastoquinone oxidoreductase that uses light energy to abstract electrons from H(2)O, generating O(2) and a proton gradient subsequently used for ATP formation. It consists of a core antenna complex that captures photons, and an electron transfer chain that converts photonic excitation into a charge separation. The sequence is that of Cytochrome b559 subunit beta from Psilotum nudum (Whisk fern).